The following is a 359-amino-acid chain: 4-galactosyl-N-acetylglucosaminide 3-alpha-L-fucosyltransferase 9 (359 aa).

Residues 1–11 (MTSTSKGILRP) are Cytoplasmic-facing. Residues 12–32 (FLIVCIILGCFMACLLIYIKP) traverse the membrane as a helical; Signal-anchor for type II membrane protein segment. Topologically, residues 33–359 (TNSWIFSPME…VGNLEKWFWN (327 aa)) are lumenal. A glycan (N-linked (GlcNAc...) asparagine) is linked at asparagine 62. The segment at 63 to 168 (ETTILVWVWP…RRDSDIQVPY (106 aa)) is acceptor-binding. A beta-D-galactosyl-(1-&gt;4)-N-acetyl-beta-D-glucosaminyl derivative is bound at residue glutamine 75. Disulfide bonds link cysteine 82-cysteine 335, cysteine 91-cysteine 338, and cysteine 190-cysteine 238. Asparagine 101 carries N-linked (GlcNAc...) asparagine glycosylation. Glutamate 137 is an a beta-D-galactosyl-(1-&gt;4)-N-acetyl-beta-D-glucosaminyl derivative binding site. The active-site Nucleophile is glutamate 137. Glutamate 137 serves as a coordination point for GDP-beta-L-fucose. Asparagine 153 carries an N-linked (GlcNAc...) asparagine glycan. The GDP-beta-L-fucose site is built by tyrosine 168, valine 192, serine 194, asparagine 195, arginine 202, valine 226, tyrosine 241, asparagine 246, tyrosine 252, glutamate 255, and lysine 256. The segment at 169–326 (GFLTVSTNPF…NWRKDFTVNL (158 aa)) is donor-binding. The interval 327–359 (PRFWESHACLACDHVKRHQEYKSVGNLEKWFWN) is acceptor-binding.

The protein belongs to the glycosyltransferase 10 family. In terms of assembly, homodimer. N-glycosylated with complex-type N-glycans. The glycan alpha-D-Man-(1-&gt;3)-beta-D-Man-(1-&gt;4)-GlcNAc-(1-&gt;4)-GlcNAc is attached at Asn-153. Strongly expressed in forebrain and stomach, lower expression in spleen and peripheral blood leukocytes, and no expression in small intestine, colon, liver, lung, kidney, adrenal cortex or uterus. Highly expressed in granulocytes. Not expressed in monocytes.

The protein resides in the golgi apparatus. The protein localises to the trans-Golgi network membrane. It is found in the golgi apparatus membrane. It catalyses the reaction a beta-D-galactosyl-(1-&gt;4)-N-acetyl-beta-D-glucosaminyl derivative + GDP-beta-L-fucose = a beta-D-galactosyl-(1-&gt;4)-[alpha-L-fucosyl-(1-&gt;3)]-N-acetyl-beta-D-glucosaminyl derivative + GDP + H(+). The catalysed reaction is an alpha-Neu5Ac-(2-&gt;3)-beta-D-Gal-(1-&gt;4)-beta-D-GlcNAc-(1-&gt;3)-beta-D-Gal-(1-&gt;4)-beta-D-GlcNAc derivative + GDP-beta-L-fucose = an alpha-Neu5Ac-(2-&gt;3)-beta-D-Gal-(1-&gt;4)-beta-D-GlcNAc-(1-&gt;3)-beta-D-Gal-(1-&gt;4)-[alpha-L-Fuc-(1-&gt;3)]-beta-D-GlcNAc derivative + GDP + H(+). The enzyme catalyses alpha-N-glycoloylneuraminosyl-(2-&gt;3)-beta-D-galactosyl-(1-&gt;4)-N-acetyl-beta-D-glucosaminyl-(1-&gt;3)-beta-D-galactosyl-(1-&gt;4)-N-acetyl-beta-D-glucosaminyl-(1-&gt;3)-beta-D-galactosyl-(1-&gt;4)-beta-D-glucosyl-(1&lt;-&gt;1')-ceramide + GDP-beta-L-fucose = alpha-N-glycoloylneuraminosyl-(2-&gt;3)-beta-D-galactosyl-(1-&gt;4)-N-acetyl-beta-D-glucosaminyl-(1-&gt;3)-beta-D-galactosyl-(1-&gt;4)-[alpha-L-fucosyl-(1-&gt;3)]-N-acetyl-beta-D-glucosaminyl-(1-&gt;3)-beta-D-galactosyl-(1-&gt;4)-beta-D-glucosyl-(1&lt;-&gt;1')-ceramide + GDP + H(+). It carries out the reaction alpha-D-galactosyl-(1-&gt;3)-beta-D-galactosyl-(1-&gt;4)-N-acetyl-beta-D-glucosaminyl-(1-&gt;3)-beta-D-galactosyl-(1-&gt;4)-beta-D-glucosyl-(1&lt;-&gt;1')-ceramide + GDP-beta-L-fucose = a neolactoside IV(3)-alpha-Gal,III(3)-alpha-Fuc-nLc4Cer + GDP + H(+). It catalyses the reaction a neolactoside nLc4Cer + GDP-beta-L-fucose = a neolactoside III(3)-alpha-Fuc-nLc4Cer + GDP + H(+). The catalysed reaction is an N-acetyl-alpha-neuraminyl-(2-&gt;3)-beta-D-galactosyl-(1-&gt;4)-N-acetyl-beta-D-glucosaminyl derivative + GDP-beta-L-fucose = an alpha-Neu5Ac-(2-&gt;3)-beta-D-Gal-(1-&gt;4)-[alpha-L-Fuc-(1-&gt;3)]-beta-D-GlcNAc derivative + GDP + H(+). The enzyme catalyses beta-D-Gal-(1-&gt;4)-beta-D-GlcNAc-(1-&gt;3)-beta-D-Gal-(1-&gt;4)-D-Glc + GDP-beta-L-fucose = beta-D-Gal-(1-&gt;4)-[alpha-L-Fuc-(1-&gt;3)]-beta-D-GlcNAc-(1-&gt;3)-beta-D-Gal-(1-&gt;4)-D-Glc + GDP + H(+). It carries out the reaction an alpha-L-Fuc-(1-&gt;2)-beta-D-Gal-(1-&gt;4)-beta-D-GlcNAc derivative + GDP-beta-L-fucose = an alpha-L-Fuc-(1-&gt;2)-beta-D-Gal-(1-&gt;4)-[alpha-L-Fuc-(1-&gt;3)]-beta-D-GlcNAc derivative + GDP + H(+). It functions in the pathway protein modification; protein glycosylation. It participates in glycolipid biosynthesis. With respect to regulation, activated by Mn2+. Its function is as follows. Catalyzes alpha(1-&gt;3) linkage of fucosyl moiety transferred from GDP-beta-L-fucose to N-acetyl glucosamine (GlcNAc) within type 2 lactosamine (LacNAc, beta-D-Gal-(1-&gt;4)-beta-D-GlcNAc-) glycan attached to glycolipids and N- or O-linked glycoproteins. Fucosylates distal type 2 LacNAc and its fucosylated (H-type 2 LacNAc) and sialylated (sialyl-type 2 LacNAc) derivatives to form Lewis x (Lex) (CD15) and Lewis y (Ley) antigenic epitopes involved in cell adhesion and differentiation. Generates Lex epitopes in the brain, presumably playing a role in the maintenance of neuronal stemness and neurite outgrowth in progenitor neural cells. Fucosylates the internal type 2 LacNAc unit of the polylactosamine chain to form VIM-2 antigen that serves as recognition epitope for SELE. Can also modify milk oligosaccharides, in particular type 2 tetrasaccharide LNnT. This is 4-galactosyl-N-acetylglucosaminide 3-alpha-L-fucosyltransferase 9 from Homo sapiens (Human).